The following is a 276-amino-acid chain: Phosphatidylglycerol--prolipoprotein diacylglyceryl transferase (276 aa).

The next 3 membrane-spanning stretches (helical) occupy residues 17–37, 63–83, and 95–115; these read LAIH…FFLA, ILFL…CLFY, and ILAV…VLAS. Arginine 146 contributes to the a 1,2-diacyl-sn-glycero-3-phospho-(1'-sn-glycerol) binding site. 3 consecutive transmembrane segments (helical) span residues 182 to 202, 209 to 229, and 235 to 255; these read SQVY…WLYA, GQVS…AEYF, and FLGI…PMIV.

The protein belongs to the Lgt family.

It is found in the cell inner membrane. The enzyme catalyses L-cysteinyl-[prolipoprotein] + a 1,2-diacyl-sn-glycero-3-phospho-(1'-sn-glycerol) = an S-1,2-diacyl-sn-glyceryl-L-cysteinyl-[prolipoprotein] + sn-glycerol 1-phosphate + H(+). It participates in protein modification; lipoprotein biosynthesis (diacylglyceryl transfer). Catalyzes the transfer of the diacylglyceryl group from phosphatidylglycerol to the sulfhydryl group of the N-terminal cysteine of a prolipoprotein, the first step in the formation of mature lipoproteins. The chain is Phosphatidylglycerol--prolipoprotein diacylglyceryl transferase from Polaromonas sp. (strain JS666 / ATCC BAA-500).